The chain runs to 39 residues: Natriuretic peptide NsNP-b (39 aa).

The propeptide occupies 1-8 (SGSKTAKI). A disulfide bridge connects residues C12 and C28. Residues 19–39 (RIGSTSGMGCGSVPKPTPGGS) form a disordered region.

It belongs to the natriuretic peptide family. Expressed by the venom gland.

Its subcellular location is the secreted. Snake venom natriuretic peptide that targets both NPR1 and NPR2. Exhibits hypotensive and vasodepressor activities. The chain is Natriuretic peptide NsNP-b from Notechis scutatus scutatus (Mainland tiger snake).